The chain runs to 338 residues: 4-hydroxy-3-methylbut-2-enyl diphosphate reductase (338 aa).

Cys21 provides a ligand contact to [4Fe-4S] cluster. (2E)-4-hydroxy-3-methylbut-2-enyl diphosphate-binding residues include His50 and His83. Dimethylallyl diphosphate contacts are provided by His50 and His83. Isopentenyl diphosphate contacts are provided by His50 and His83. A [4Fe-4S] cluster-binding site is contributed by Cys105. Residue His133 coordinates (2E)-4-hydroxy-3-methylbut-2-enyl diphosphate. Residue His133 coordinates dimethylallyl diphosphate. His133 is a binding site for isopentenyl diphosphate. The active-site Proton donor is the Glu135. (2E)-4-hydroxy-3-methylbut-2-enyl diphosphate is bound at residue Thr173. Cys203 is a binding site for [4Fe-4S] cluster. 4 residues coordinate (2E)-4-hydroxy-3-methylbut-2-enyl diphosphate: Ser231, Ser232, Asn233, and Ser276. Residues Ser231, Ser232, Asn233, and Ser276 each contribute to the dimethylallyl diphosphate site. Isopentenyl diphosphate-binding residues include Ser231, Ser232, Asn233, and Ser276.

Belongs to the IspH family. It depends on [4Fe-4S] cluster as a cofactor.

It carries out the reaction isopentenyl diphosphate + 2 oxidized [2Fe-2S]-[ferredoxin] + H2O = (2E)-4-hydroxy-3-methylbut-2-enyl diphosphate + 2 reduced [2Fe-2S]-[ferredoxin] + 2 H(+). The catalysed reaction is dimethylallyl diphosphate + 2 oxidized [2Fe-2S]-[ferredoxin] + H2O = (2E)-4-hydroxy-3-methylbut-2-enyl diphosphate + 2 reduced [2Fe-2S]-[ferredoxin] + 2 H(+). Its pathway is isoprenoid biosynthesis; dimethylallyl diphosphate biosynthesis; dimethylallyl diphosphate from (2E)-4-hydroxy-3-methylbutenyl diphosphate: step 1/1. It participates in isoprenoid biosynthesis; isopentenyl diphosphate biosynthesis via DXP pathway; isopentenyl diphosphate from 1-deoxy-D-xylulose 5-phosphate: step 6/6. Its function is as follows. Catalyzes the conversion of 1-hydroxy-2-methyl-2-(E)-butenyl 4-diphosphate (HMBPP) into a mixture of isopentenyl diphosphate (IPP) and dimethylallyl diphosphate (DMAPP). Acts in the terminal step of the DOXP/MEP pathway for isoprenoid precursor biosynthesis. The chain is 4-hydroxy-3-methylbut-2-enyl diphosphate reductase from Streptomyces avermitilis (strain ATCC 31267 / DSM 46492 / JCM 5070 / NBRC 14893 / NCIMB 12804 / NRRL 8165 / MA-4680).